The primary structure comprises 257 residues: MSINDKPIGFFDSGVGGISVLKEAFKLLPKEDFLYYGDSKNAPYGTKKVEEVKALTSNATDFLMNKGIKALVVACNTATSVTINDLRENYDIPIIGIEPALKPAVELKKGGKIIIMATPMTLAEKKFANLMDLYKETEDIEPLPCPGLPELIEQGIVSGDIIYNYLKDKFSKYDNEKISSIVLGCTHYPFIEETLKEVTHNKACIIDGSFGTSRELKRQLKNSNMLREENRVGKVTIFNSREDKDIIDLSYKLFNMK.

Residues 12–13 (DS) and 44–45 (YG) each bind substrate. The Proton donor/acceptor role is filled by Cys75. 76 to 77 (NT) is a binding site for substrate. Catalysis depends on Cys185, which acts as the Proton donor/acceptor. Residue 186 to 187 (TH) coordinates substrate.

This sequence belongs to the aspartate/glutamate racemases family.

It catalyses the reaction L-glutamate = D-glutamate. Its pathway is cell wall biogenesis; peptidoglycan biosynthesis. Functionally, provides the (R)-glutamate required for cell wall biosynthesis. This is Glutamate racemase from Clostridium botulinum (strain Kyoto / Type A2).